Here is a 476-residue protein sequence, read N- to C-terminus: MLILLLHAVVFSLPYTRATEACLRACPAACTCSHVERGCSVRCDRAGLQRVPQEFPCEAASIDLDRNGLRILGERAFGTLPSLRRLSLRHNNLSFITPGAFKGLPRLAELRLAHNGELRYLHVRTFAALGRLRRLDLAACRLFSVPERLLAELPALRELTAFDNLFRRVPGALRGLANLTHAHFERSRIEAVASGSLLGMRRLRSLSLQANRVRAVHAGAFGDCGALEDLLLNDNLLATLPAAAFRGLRRLRTLNLGGNALGSVARAWFSDLAELELLYLDRNSITFVEEGAFQNLSGLLALHLNGNRLTVLSWAAFQPGFFLGRLFLFRNPWRCDCQLEWLRDWMEGSGRVADVACASPGSVAGQDLSQVVFERSSDGLCVDPDELNFTTSSPGPSPEPVATTVSRFSSLLSKLLAPRAPVEEVANTTWELVNVSLNDSFRSHAVMVFCYKATFLFTSCVLLSLAQYVVVGLQRE.

Residues 1–18 (MLILLLHAVVFSLPYTRA) form the signal peptide. The region spanning 19–57 (TEACLRACPAACTCSHVERGCSVRCDRAGLQRVPQEFPC) is the LRRNT domain. 11 LRR repeats span residues 58 to 79 (EAAS…AFGT), 82 to 103 (SLRR…AFKG), 106 to 128 (RLAE…TFAA), 131 to 154 (RLRR…AELP), 155 to 177 (ALRE…RGLA), 178 to 199 (NLTH…SLLG), 202 to 223 (RLRS…AFGD), 226 to 247 (ALED…AFRG), 250 to 271 (RLRT…WFSD), 274 to 295 (ELEL…AFQN), and 298 to 319 (GLLA…AFQP). N-linked (GlcNAc...) asparagine glycosylation occurs at asparagine 92. N-linked (GlcNAc...) asparagine glycosylation occurs at asparagine 178. A glycan (N-linked (GlcNAc...) asparagine) is linked at asparagine 295. An LRRCT domain is found at 331–383 (NPWRCDCQLEWLRDWMEGSGRVADVACASPGSVAGQDLSQVVFERSSDGLCVD). Residues asparagine 388, asparagine 427, asparagine 434, and asparagine 438 are each glycosylated (N-linked (GlcNAc...) asparagine).

Belongs to the small leucine-rich proteoglycan (SLRP) family. SLRP class IV subfamily. In terms of tissue distribution, expressed abundantly in retina with lower levels in brain, lung, spleen and testis. Not detected in kidney, heart or liver. In the retina, highest expression found in the inner nuclear layer and ganglion cell layer.

The protein localises to the secreted. It is found in the extracellular space. Its subcellular location is the extracellular matrix. This is Nyctalopin (Nyx) from Mus musculus (Mouse).